A 431-amino-acid polypeptide reads, in one-letter code: Fibrinogen C domain-containing protein 1 (431 aa).

Residues 1-3 are Cytoplasmic-facing; it reads MLC. Residues 4 to 24 traverse the membrane as a helical; Signal-anchor for type II membrane protein segment; it reads TVLLALAVLLAVAVTGAVLFL. The Extracellular segment spans residues 25-431; it reads NHTHTPGTAP…MKIRPVREDR (407 aa). A Fibrinogen C-terminal domain is found at 205-428; the sequence is CATGSRPRDC…FSEMKIRPVR (224 aa). Cysteine 214 and cysteine 243 are disulfide-bonded. N-linked (GlcNAc...) asparagine glycosylation is present at asparagine 310. Residues aspartate 363 and aspartate 365 each coordinate Ca(2+). Cysteine 371 and cysteine 384 are joined by a disulfide.

In terms of assembly, homotetramer; disulfide-linked.

The protein localises to the membrane. Acetyl group-binding receptor which shows a high-affinity and calcium-dependent binding to acetylated structures such as chitin, some N-acetylated carbohydrates, and amino acids, but not to their non-acetylated counterparts. Can facilitate the endocytosis of acetylated components. This Macaca fascicularis (Crab-eating macaque) protein is Fibrinogen C domain-containing protein 1 (FIBCD1).